The sequence spans 343 residues: Anthranilate phosphoribosyltransferase (343 aa).

5-phospho-alpha-D-ribose 1-diphosphate-binding positions include G84, 87–88 (GD), T92, 94–97 (NIST), 112–120 (KHGNRGVSS), and S124. G84 serves as a coordination point for anthranilate. Mg(2+) is bound at residue S96. Residue N115 participates in anthranilate binding. R170 contributes to the anthranilate binding site. Residues D229 and E230 each contribute to the Mg(2+) site.

Belongs to the anthranilate phosphoribosyltransferase family. In terms of assembly, homodimer. It depends on Mg(2+) as a cofactor.

The enzyme catalyses N-(5-phospho-beta-D-ribosyl)anthranilate + diphosphate = 5-phospho-alpha-D-ribose 1-diphosphate + anthranilate. The protein operates within amino-acid biosynthesis; L-tryptophan biosynthesis; L-tryptophan from chorismate: step 2/5. In terms of biological role, catalyzes the transfer of the phosphoribosyl group of 5-phosphorylribose-1-pyrophosphate (PRPP) to anthranilate to yield N-(5'-phosphoribosyl)-anthranilate (PRA). This is Anthranilate phosphoribosyltransferase from Burkholderia orbicola (strain AU 1054).